Consider the following 574-residue polypeptide: VAO-type flavoprotein oxidase VAO615 (574 aa).

The signal sequence occupies residues 1 to 17; sequence MPASLLRFLALAGTAVG. Disulfide bonds link cysteine 28-cysteine 572, cysteine 64-cysteine 77, cysteine 108-cysteine 118, and cysteine 450-cysteine 476. N-linked (GlcNAc...) asparagine glycosylation occurs at asparagine 47. Asparagine 105 carries N-linked (GlcNAc...) asparagine glycosylation. An FAD-binding PCMH-type domain is found at 120-299; it reads LGNYPSYVVN…LSMTARLHRD (180 aa). N-linked (GlcNAc...) asparagine glycosylation is found at asparagine 129, asparagine 211, asparagine 310, asparagine 346, and asparagine 438. Residues 157–222 constitute a cross-link (6-(S-cysteinyl)-8alpha-(pros-histidyl)-FAD (His-Cys)); that stretch reads HDYLGKSTGK…TGHRIVGGTC (66 aa).

It belongs to the oxygen-dependent FAD-linked oxidoreductase family. It depends on FAD as a cofactor. In terms of processing, the FAD cofactor is bound via a bicovalent 6-S-cysteinyl, 8alpha-N1-histidyl FAD linkage.

The protein localises to the secreted. In terms of biological role, probably oxidoreductase that, when reduced, rapidly reacts with molecular oxygen, a hallmark of flavoprotein oxidases. A large panel of alcohols, including carbohydrates, steroids and secondary alcohols were tested as potential substrates, but none has been identified so far. The polypeptide is VAO-type flavoprotein oxidase VAO615 (Thermothelomyces thermophilus (strain ATCC 42464 / BCRC 31852 / DSM 1799) (Sporotrichum thermophile)).